We begin with the raw amino-acid sequence, 141 residues long: Protein C19orf12 homolog (141 aa).

A helical transmembrane segment spans residues 37–57 (GLAFAGGLIGGPLGIAVGGAV).

The protein belongs to the C19orf12 family.

Its subcellular location is the mitochondrion. It is found in the mitochondrion membrane. The protein localises to the endoplasmic reticulum. The protein resides in the cytoplasm. It localises to the cytosol. The polypeptide is Protein C19orf12 homolog (Danio rerio (Zebrafish)).